Reading from the N-terminus, the 31-residue chain is Photosystem II reaction center protein T (31 aa).

Residues Ala-3–Phe-23 traverse the membrane as a helical segment.

It belongs to the PsbT family. PSII is composed of 1 copy each of membrane proteins PsbA, PsbB, PsbC, PsbD, PsbE, PsbF, PsbH, PsbI, PsbJ, PsbK, PsbL, PsbM, PsbT, PsbY, PsbZ, Psb30/Ycf12, at least 3 peripheral proteins of the oxygen-evolving complex and a large number of cofactors. It forms dimeric complexes.

Its subcellular location is the plastid. The protein resides in the chloroplast thylakoid membrane. Functionally, found at the monomer-monomer interface of the photosystem II (PS II) dimer, plays a role in assembly and dimerization of PSII. PSII is a light-driven water plastoquinone oxidoreductase, using light energy to abstract electrons from H(2)O, generating a proton gradient subsequently used for ATP formation. In Tupiella akineta (Green alga), this protein is Photosystem II reaction center protein T.